The chain runs to 569 residues: Proline--tRNA ligase (569 aa).

Belongs to the class-II aminoacyl-tRNA synthetase family. ProS type 1 subfamily. As to quaternary structure, homodimer.

The protein resides in the cytoplasm. The catalysed reaction is tRNA(Pro) + L-proline + ATP = L-prolyl-tRNA(Pro) + AMP + diphosphate. Its function is as follows. Catalyzes the attachment of proline to tRNA(Pro) in a two-step reaction: proline is first activated by ATP to form Pro-AMP and then transferred to the acceptor end of tRNA(Pro). As ProRS can inadvertently accommodate and process non-cognate amino acids such as alanine and cysteine, to avoid such errors it has two additional distinct editing activities against alanine. One activity is designated as 'pretransfer' editing and involves the tRNA(Pro)-independent hydrolysis of activated Ala-AMP. The other activity is designated 'posttransfer' editing and involves deacylation of mischarged Ala-tRNA(Pro). The misacylated Cys-tRNA(Pro) is not edited by ProRS. This is Proline--tRNA ligase from Dehalococcoides mccartyi (strain CBDB1).